The chain runs to 279 residues: Ankyrin repeat domain-containing protein 7 (279 aa).

Positions 1-11 (MKKFFPFRGKR) are enriched in basic residues. The tract at residues 1 to 25 (MKKFFPFRGKRKTDDSHSHSSEVPI) is disordered. ANK repeat units follow at residues 80 to 109 (RSRT…KINV), 113 to 142 (ENRT…DPNL), 146 to 175 (YSNT…NLEA), 179 to 208 (DGHT…DVNA), and 212 to 241 (NHRT…DLAH).

This Mus musculus (Mouse) protein is Ankyrin repeat domain-containing protein 7 (Ankrd7).